The sequence spans 474 residues: Probable phenylalanine--tRNA ligase alpha subunit (474 aa).

The interval 1–150 (MSLSQKILEL…KRKLIYQAKE (150 aa)) is contains the major tRNA-Phe binding sites. L-phenylalanine is bound by residues threonine 308, 350-352 (QVE), and tyrosine 390. Residue glutamate 392 coordinates Mg(2+). Phenylalanine 416 serves as a coordination point for L-phenylalanine.

This sequence belongs to the class-II aminoacyl-tRNA synthetase family. Phe-tRNA synthetase alpha subunit type 2 subfamily. Tetramer of two alpha and two beta subunits. Mg(2+) is required as a cofactor.

It localises to the cytoplasm. It carries out the reaction tRNA(Phe) + L-phenylalanine + ATP = L-phenylalanyl-tRNA(Phe) + AMP + diphosphate + H(+). In Vairimorpha ceranae (strain BRL01) (Microsporidian parasite), this protein is Probable phenylalanine--tRNA ligase alpha subunit.